The primary structure comprises 390 residues: Succinate--CoA ligase [ADP-forming] subunit beta (390 aa).

The 240-residue stretch at 9–248 (KDILRKFGVT…TSEEDPFEVE (240 aa)) folds into the ATP-grasp domain. ATP-binding positions include K50, 57–59 (GRG), E103, M106, and E111. Mg(2+)-binding residues include N203 and D217. Substrate-binding positions include N268 and 325-327 (GIV).

This sequence belongs to the succinate/malate CoA ligase beta subunit family. As to quaternary structure, heterotetramer of two alpha and two beta subunits. It depends on Mg(2+) as a cofactor.

The enzyme catalyses succinate + ATP + CoA = succinyl-CoA + ADP + phosphate. The catalysed reaction is GTP + succinate + CoA = succinyl-CoA + GDP + phosphate. Its pathway is carbohydrate metabolism; tricarboxylic acid cycle; succinate from succinyl-CoA (ligase route): step 1/1. Its function is as follows. Succinyl-CoA synthetase functions in the citric acid cycle (TCA), coupling the hydrolysis of succinyl-CoA to the synthesis of either ATP or GTP and thus represents the only step of substrate-level phosphorylation in the TCA. The beta subunit provides nucleotide specificity of the enzyme and binds the substrate succinate, while the binding sites for coenzyme A and phosphate are found in the alpha subunit. This chain is Succinate--CoA ligase [ADP-forming] subunit beta, found in Chlorobium chlorochromatii (strain CaD3).